A 455-amino-acid polypeptide reads, in one-letter code: tRNA modification GTPase MnmE (455 aa).

3 residues coordinate (6S)-5-formyl-5,6,7,8-tetrahydrofolate: R25, E85, and R124. The TrmE-type G domain maps to 221-375 (GLSTAIIGRP…IEERINKLFF (155 aa)). K(+) is bound at residue N231. Residues 231-236 (NVGKSS), 250-256 (TDIEGTT), and 275-278 (DTAG) contribute to the GTP site. S235 is a binding site for Mg(2+). K(+)-binding residues include T250, I252, and T255. Residue T256 coordinates Mg(2+). Position 455 (K455) interacts with (6S)-5-formyl-5,6,7,8-tetrahydrofolate.

Belongs to the TRAFAC class TrmE-Era-EngA-EngB-Septin-like GTPase superfamily. TrmE GTPase family. As to quaternary structure, homodimer. Heterotetramer of two MnmE and two MnmG subunits. The cofactor is K(+).

Its subcellular location is the cytoplasm. In terms of biological role, exhibits a very high intrinsic GTPase hydrolysis rate. Involved in the addition of a carboxymethylaminomethyl (cmnm) group at the wobble position (U34) of certain tRNAs, forming tRNA-cmnm(5)s(2)U34. This chain is tRNA modification GTPase MnmE, found in Streptococcus mutans serotype c (strain ATCC 700610 / UA159).